A 108-amino-acid chain; its full sequence is uncharacterized protein (108 aa).

Residues 7-27 (FIPMLLVANAAPYFFYPIFML) form a helical membrane-spanning segment.

It to N.crassa NCU05373.1.

It localises to the membrane. This is an uncharacterized protein from Schizosaccharomyces pombe (strain 972 / ATCC 24843) (Fission yeast).